Consider the following 121-residue polypeptide: Spermidine export protein MdtJ (121 aa).

4 consecutive transmembrane segments (helical) span residues 1-21 (MYIY…GTLS), 32-52 (GGFI…SFAV), 55-75 (IALG…ITLF), and 82-102 (ESLS…IVLI).

The protein belongs to the drug/metabolite transporter (DMT) superfamily. Small multidrug resistance (SMR) (TC 2.A.7.1) family. MdtJ subfamily. In terms of assembly, forms a complex with MdtI.

It is found in the cell inner membrane. In terms of biological role, catalyzes the excretion of spermidine. The polypeptide is Spermidine export protein MdtJ (Escherichia coli O127:H6 (strain E2348/69 / EPEC)).